Consider the following 127-residue polypeptide: Large ribosomal subunit protein bL17 (127 aa).

It belongs to the bacterial ribosomal protein bL17 family. As to quaternary structure, part of the 50S ribosomal subunit. Contacts protein L32.

In Pelobacter propionicus (strain DSM 2379 / NBRC 103807 / OttBd1), this protein is Large ribosomal subunit protein bL17.